Consider the following 162-residue polypeptide: Anthrone oxygenase nsrD (162 aa).

3 helical membrane-spanning segments follow: residues 17–37 (FLSG…LDTI), 54–74 (GSIY…YVAL), and 86–106 (PYVL…WVMV). Residue Asn-109 is glycosylated (N-linked (GlcNAc...) asparagine). Residues 130-150 (LVVKWAWLHVVRSLYPLFGAF) traverse the membrane as a helical segment.

It belongs to the anthrone oxygenase family.

It is found in the membrane. The enzyme catalyses emodin anthrone + O2 = emodin + H2O + H(+). It participates in secondary metabolite biosynthesis. Functionally, anthrone oxygenase; part of the gene cluster that mediates the biosynthesis of the tetrahydroxanthone dimer neosartorin, which exhibits antibacterial activity. The two different monomeric units appear to be synthesized by the same set of enzymes, among which the Baeyer-Villiger monooxygenase nsrF is the key enzyme for the divergence of the biosynthetic routes. The pathway begins with the synthesis of atrochrysone thioester by the polyketide synthase nsrB. The atrochrysone carboxyl ACP thioesterase nsrC then breaks the thioester bond and releases the atrochrysone carboxylic acid from AacuL. Atrochrysone carboxylic acid is decarboxylated by the decarboxylase nsrE, and oxidized by the anthrone oxygenase nsrD to yield emodin. Emodin is then reduced to emodin hydroquinone by the oxidoreductase nsrR. A-ring reduction by the short chain dehydrogenase nsrJ, dehydration by the scytalone dehydratase-like protein nsrI and probable spontaneous re-oxidation, results in overall deoxygenation to chrysophanol. The Baeyer-Villiger monooxygenase nsrF accepts chrysophanol as a substrate to insert one oxygen atom at two different positions to yield the precursors of both monomric units. NsrF is promiscuous/flexible in interacting with the 2 (non methylated and methylated) aromatic rings of chrysophanol, thus diverging the biosynthetic pathway at this point. After the hydrolysis of the lactones, methylesterification by the methyltransferase nsrG yields respectively moniliphenone and 2,2',6'-trihydroxy-4-methyl-6-methoxya-cyldiphenylmethanone. The next steps are the hydroxylation by the FAD-dependent monooxygenase nsrK, followed by isomerization by the monooxygenase nsrQ. The short chain dehydrogenase/reductase nsrO then catalyzes the C-5 ketoreduction to give the xanthone skeleton of blennolide C and 5-acetylblennolide A. The acetyltransferase nsrL has a strict substrate specificity and uses only blennolide A but not blennolide C to yield 5-acetylblennolide A as the single-acetylated product. In the final step of the biosynthesis, the heterodimerization of the 2 xanthones, blennolide C and 5-acetylblennolide A, is catalyzed by the cytochrome P450 monooxygenase nsrP. NsrP can utilize at least three different xanthones as its substrates to perform the dimerization reaction. This chain is Anthrone oxygenase nsrD, found in Aspergillus novofumigatus (strain IBT 16806).